The sequence spans 113 residues: T cell receptor alpha variable 8-1 (113 aa).

The first 20 residues, 1–20, serve as a signal peptide directing secretion; sequence MLLLLIPVLGMIFALRDARA. The region spanning 21–113 is the Ig-like domain; the sequence is QSVSQHNHHV…DTAEYFCAVN (93 aa). Cysteine 42 and cysteine 110 are joined by a disulfide. The N-linked (GlcNAc...) asparagine glycan is linked to asparagine 43.

In terms of assembly, alpha-beta TR is a heterodimer composed of an alpha and beta chain; disulfide-linked. The alpha-beta TR is associated with the transmembrane signaling CD3 coreceptor proteins to form the TR-CD3 (TcR or TCR). The assembly of alpha-beta TR heterodimers with CD3 occurs in the endoplasmic reticulum where a single alpha-beta TR heterodimer associates with one CD3D-CD3E heterodimer, one CD3G-CD3E heterodimer and one CD247 homodimer forming a stable octameric structure. CD3D-CD3E and CD3G-CD3E heterodimers preferentially associate with TR alpha and TR beta chains, respectively. The association of the CD247 homodimer is the last step of TcR assembly in the endoplasmic reticulum and is required for transport to the cell surface.

Its subcellular location is the cell membrane. In terms of biological role, v region of the variable domain of T cell receptor (TR) alpha chain that participates in the antigen recognition. Alpha-beta T cell receptors are antigen specific receptors which are essential to the immune response and are present on the cell surface of T lymphocytes. Recognize peptide-major histocompatibility (MH) (pMH) complexes that are displayed by antigen presenting cells (APC), a prerequisite for efficient T cell adaptive immunity against pathogens. Binding of alpha-beta TR to pMH complex initiates TR-CD3 clustering on the cell surface and intracellular activation of LCK that phosphorylates the ITAM motifs of CD3G, CD3D, CD3E and CD247 enabling the recruitment of ZAP70. In turn ZAP70 phosphorylates LAT, which recruits numerous signaling molecules to form the LAT signalosome. The LAT signalosome propagates signal branching to three major signaling pathways, the calcium, the mitogen-activated protein kinase (MAPK) kinase and the nuclear factor NF-kappa-B (NF-kB) pathways, leading to the mobilization of transcription factors that are critical for gene expression and essential for T cell growth and differentiation. The T cell repertoire is generated in the thymus, by V-(D)-J rearrangement. This repertoire is then shaped by intrathymic selection events to generate a peripheral T cell pool of self-MH restricted, non-autoaggressive T cells. Post-thymic interaction of alpha-beta TR with the pMH complexes shapes TR structural and functional avidity. This Homo sapiens (Human) protein is T cell receptor alpha variable 8-1.